Consider the following 554-residue polypeptide: Undecaprenyl phosphate-alpha-4-amino-4-deoxy-L-arabinose arabinosyl transferase (554 aa).

A run of 11 helical transmembrane segments spans residues 4 to 24 (LKDS…LLPV), 87 to 107 (FGSI…ATLL), 115 to 135 (VLAT…TYAV), 178 to 198 (FMTK…PIVI), 206 to 226 (LVVF…PWAL), 262 to 282 (YLPI…GALF), 293 to 313 (ELFF…VAKG), 315 to 335 (LPTY…AYAT), 351 to 371 (VINL…GLGL), 384 to 404 (QKVW…FITL), and 414 to 434 (AAAC…QQVV).

This sequence belongs to the glycosyltransferase 83 family.

Its subcellular location is the cell inner membrane. The enzyme catalyses 4-amino-4-deoxy-alpha-L-arabinopyranosyl di-trans,octa-cis-undecaprenyl phosphate + lipid IVA = lipid IIA + di-trans,octa-cis-undecaprenyl phosphate.. It functions in the pathway lipopolysaccharide metabolism; 4-amino-4-deoxy-beta-L-arabinose-lipid A biosynthesis. Catalyzes the transfer of the L-Ara4N moiety of the glycolipid undecaprenyl phosphate-alpha-L-Ara4N to lipid A. The modified arabinose is attached to lipid A and is required for resistance to polymyxin and cationic antimicrobial peptides. The sequence is that of Undecaprenyl phosphate-alpha-4-amino-4-deoxy-L-arabinose arabinosyl transferase from Yersinia pseudotuberculosis serotype O:3 (strain YPIII).